A 320-amino-acid chain; its full sequence is uncharacterized protein (320 aa).

One can recognise an Arf-GAP domain in the interval 13-132 (ALVLKSLLRE…VLYPEIPSPE (120 aa)). Residues 28 to 52 (CADCKRNEQPRWASWNLGVFICIRC) form a C4-type zinc finger. Disordered stretches follow at residues 153–212 (NTAS…STRQ), 227–261 (RPQV…YGAF), and 284–320 (NVTS…DVWK). Over residues 154-176 (TASRSSSAHSVKSTSSATVTNVT) the composition is skewed to low complexity. Composition is skewed to polar residues over residues 183–210 (SATT…APST) and 228–244 (PQVS…YQNL). 2 stretches are compositionally biased toward low complexity: residues 245 to 257 (PSPV…SSQP) and 295 to 310 (SPVQ…SLDS).

It is found in the cytoplasm. Its subcellular location is the golgi apparatus. Its function is as follows. GTPase-activating protein for the ADP ribosylation factor family. This is an uncharacterized protein from Schizosaccharomyces pombe (strain 972 / ATCC 24843) (Fission yeast).